Consider the following 940-residue polypeptide: UvrABC system protein A (940 aa).

Residue 33-40 participates in ATP binding; sequence GVSGSGKS. The segment at 252-279 adopts a C4-type zinc-finger fold; that stretch reads CPVCGFTVPELEPRLFSFNAPFGSCPDC. 2 ABC transporter domains span residues 309 to 586 and 606 to 935; these read WYGK…KKSL and IDKK…QYLK. 639-646 lines the ATP pocket; it reads GVSGSGKS. Residues 738–764 form a C4-type zinc finger; sequence CEACSGDGIIKIEMHFLPDVYVPCEVC.

This sequence belongs to the ABC transporter superfamily. UvrA family. In terms of assembly, forms a heterotetramer with UvrB during the search for lesions.

It is found in the cytoplasm. The UvrABC repair system catalyzes the recognition and processing of DNA lesions. UvrA is an ATPase and a DNA-binding protein. A damage recognition complex composed of 2 UvrA and 2 UvrB subunits scans DNA for abnormalities. When the presence of a lesion has been verified by UvrB, the UvrA molecules dissociate. This chain is UvrABC system protein A, found in Lactococcus lactis subsp. lactis (strain IL1403) (Streptococcus lactis).